Consider the following 342-residue polypeptide: Dihydroorotate dehydrogenase (quinone) (342 aa).

FMN is bound by residues 61-65 (AGLDK) and threonine 85. Lysine 65 serves as a coordination point for substrate. Residue 110 to 114 (NRMGF) participates in substrate binding. Residues asparagine 138 and asparagine 171 each contribute to the FMN site. Substrate is bound at residue asparagine 171. Serine 174 serves as the catalytic Nucleophile. Asparagine 176 contributes to the substrate binding site. 2 residues coordinate FMN: lysine 216 and threonine 244. Residue 245 to 246 (NT) coordinates substrate. Residues glycine 267, glycine 296, and 317–318 (YS) each bind FMN.

It belongs to the dihydroorotate dehydrogenase family. Type 2 subfamily. In terms of assembly, monomer. FMN is required as a cofactor.

Its subcellular location is the cell membrane. The enzyme catalyses (S)-dihydroorotate + a quinone = orotate + a quinol. It functions in the pathway pyrimidine metabolism; UMP biosynthesis via de novo pathway; orotate from (S)-dihydroorotate (quinone route): step 1/1. Functionally, catalyzes the conversion of dihydroorotate to orotate with quinone as electron acceptor. This is Dihydroorotate dehydrogenase (quinone) from Pseudomonas paraeruginosa (strain DSM 24068 / PA7) (Pseudomonas aeruginosa (strain PA7)).